Consider the following 327-residue polypeptide: Phosphate acyltransferase (327 aa).

It belongs to the PlsX family. Homodimer. Probably interacts with PlsY.

Its subcellular location is the cytoplasm. The catalysed reaction is a fatty acyl-[ACP] + phosphate = an acyl phosphate + holo-[ACP]. It participates in lipid metabolism; phospholipid metabolism. Catalyzes the reversible formation of acyl-phosphate (acyl-PO(4)) from acyl-[acyl-carrier-protein] (acyl-ACP). This enzyme utilizes acyl-ACP as fatty acyl donor, but not acyl-CoA. This chain is Phosphate acyltransferase, found in Thermosipho africanus (strain TCF52B).